Consider the following 54-residue polypeptide: Preprotein translocase subunit SecG (54 aa).

At 1-30 (MSKNKQDAGLSTSAGLVRYMDEDASKIKIA) the chain is on the cytoplasmic side. Residues 31-52 (PEKVLGITISIMVLLFILNYGL) form a helical membrane-spanning segment. Residues 53 to 54 (LA) lie on the Extracellular side of the membrane.

The protein belongs to the SEC61-beta family. In terms of assembly, component of the protein translocase complex. Heterotrimer consisting of alpha (SecY), beta (SecG) and gamma (SecE) subunits. Can form oligomers of the heterotrimer.

It localises to the cell membrane. Functionally, involved in protein export. The function of the beta subunit is unknown, but it may be involved in stabilization of the trimeric complex. This Methanococcus aeolicus (strain ATCC BAA-1280 / DSM 17508 / OCM 812 / Nankai-3) protein is Preprotein translocase subunit SecG.